Consider the following 181-residue polypeptide: Peptide deformylase (181 aa).

Cysteine 104 and histidine 146 together coordinate Fe cation. Glutamate 147 is a catalytic residue. A Fe cation-binding site is contributed by histidine 150.

The protein belongs to the polypeptide deformylase family. The cofactor is Fe(2+).

The enzyme catalyses N-terminal N-formyl-L-methionyl-[peptide] + H2O = N-terminal L-methionyl-[peptide] + formate. Its function is as follows. Removes the formyl group from the N-terminal Met of newly synthesized proteins. Requires at least a dipeptide for an efficient rate of reaction. N-terminal L-methionine is a prerequisite for activity but the enzyme has broad specificity at other positions. The sequence is that of Peptide deformylase from Helicobacter hepaticus (strain ATCC 51449 / 3B1).